A 412-amino-acid chain; its full sequence is Serine--tRNA ligase (412 aa).

228-230 (TAE) is an L-serine binding site. 259 to 261 (RKE) provides a ligand contact to ATP. Residue E282 participates in L-serine binding. ATP is bound at residue 346–349 (EISS). An L-serine-binding site is contributed by S380.

Belongs to the class-II aminoacyl-tRNA synthetase family. Type-1 seryl-tRNA synthetase subfamily. In terms of assembly, homodimer. The tRNA molecule binds across the dimer.

The protein localises to the cytoplasm. The enzyme catalyses tRNA(Ser) + L-serine + ATP = L-seryl-tRNA(Ser) + AMP + diphosphate + H(+). It catalyses the reaction tRNA(Sec) + L-serine + ATP = L-seryl-tRNA(Sec) + AMP + diphosphate + H(+). It functions in the pathway aminoacyl-tRNA biosynthesis; selenocysteinyl-tRNA(Sec) biosynthesis; L-seryl-tRNA(Sec) from L-serine and tRNA(Sec): step 1/1. Catalyzes the attachment of serine to tRNA(Ser). Is also able to aminoacylate tRNA(Sec) with serine, to form the misacylated tRNA L-seryl-tRNA(Sec), which will be further converted into selenocysteinyl-tRNA(Sec). This Aliarcobacter butzleri (strain RM4018) (Arcobacter butzleri) protein is Serine--tRNA ligase.